The sequence spans 468 residues: 6-phospho-beta-galactosidase (468 aa).

Positions 19, 116, 159, 160, and 297 each coordinate D-galactose 6-phosphate. The Proton donor role is filled by Glu-160. Glu-375 functions as the Nucleophile in the catalytic mechanism. 4 residues coordinate D-galactose 6-phosphate: Ser-428, Trp-429, Lys-435, and Tyr-437.

Belongs to the glycosyl hydrolase 1 family.

It catalyses the reaction a 6-phospho-beta-D-galactoside + H2O = D-galactose 6-phosphate + an alcohol. It participates in carbohydrate metabolism; lactose degradation; D-galactose 6-phosphate and beta-D-glucose from lactose 6-phosphate: step 1/1. In Streptococcus pyogenes serotype M3 (strain ATCC BAA-595 / MGAS315), this protein is 6-phospho-beta-galactosidase.